The following is a 51-amino-acid chain: Basic phospholipase A2 homolog BmatTX-I (51 aa).

C28 and C44 are oxidised to a cystine.

In terms of assembly, monomer. In terms of tissue distribution, expressed by the venom gland.

The protein localises to the secreted. Functionally, snake venom phospholipase A2 homolog that lacks enzymatic activity. Shows high myotoxic activity, neutrophile activation (demonstrated by activation induction of IL-1beta production), slight cytotoxicity against Jurkat (leukemia T) and SK-BR-3 (breast adenocarcinoma) tumor cell lines, and slight antiparasitic activity against promastigote forms of Leishmania amazonensis. A model of myotoxic mechanism has been proposed: an apo Lys49-PLA2 is activated by the entrance of a hydrophobic molecule (e.g. fatty acid) at the hydrophobic channel of the protein leading to a reorientation of a monomer. This reorientation causes a transition between 'inactive' to 'active' states, causing alignment of C-terminal and membrane-docking sites (MDoS) side-by-side and putting the membrane-disruption sites (MDiS) in the same plane, exposed to solvent and in a symmetric position for both monomers. The MDoS region stabilizes the toxin on membrane by the interaction of charged residues with phospholipid head groups. Subsequently, the MDiS region destabilizes the membrane with penetration of hydrophobic residues. This insertion causes a disorganization of the membrane, allowing an uncontrolled influx of ions (i.e. calcium and sodium), and eventually triggering irreversible intracellular alterations and cell death. This Bothrops mattogrossensis (Pitviper) protein is Basic phospholipase A2 homolog BmatTX-I.